The primary structure comprises 257 residues: Zinc transporter ZupT (257 aa).

A run of 8 helical transmembrane segments spans residues 5–25, 33–53, 61–81, 109–129, 137–157, 171–191, 195–215, and 236–256; these read LILT…GVLG, LAFS…MEML, GMSP…YFGL, AILL…ATFV, LGFG…LAVA, IFWA…AWLI, LVSP…MVAL, and GVLC…TIGI. Fe(2+) contacts are provided by N120 and E123. Zn(2+) contacts are provided by E123 and H148. Fe(2+) is bound by residues N149, E152, and E181. E152 is a Zn(2+) binding site.

This sequence belongs to the ZIP transporter (TC 2.A.5) family. ZupT subfamily.

It localises to the cell inner membrane. The enzyme catalyses Zn(2+)(in) = Zn(2+)(out). Mediates zinc uptake. May also transport other divalent cations. The polypeptide is Zinc transporter ZupT (Salmonella paratyphi A (strain ATCC 9150 / SARB42)).